The following is a 427-amino-acid chain: Enolase (427 aa).

Q163 contacts (2R)-2-phosphoglycerate. E205 functions as the Proton donor in the catalytic mechanism. Residues D242, E285, and D312 each contribute to the Mg(2+) site. Residues K337, R366, S367, and K388 each contribute to the (2R)-2-phosphoglycerate site. The Proton acceptor role is filled by K337.

This sequence belongs to the enolase family. Mg(2+) is required as a cofactor.

The protein resides in the cytoplasm. It localises to the secreted. It is found in the cell surface. The catalysed reaction is (2R)-2-phosphoglycerate = phosphoenolpyruvate + H2O. The protein operates within carbohydrate degradation; glycolysis; pyruvate from D-glyceraldehyde 3-phosphate: step 4/5. Its function is as follows. Catalyzes the reversible conversion of 2-phosphoglycerate (2-PG) into phosphoenolpyruvate (PEP). It is essential for the degradation of carbohydrates via glycolysis. This chain is Enolase, found in Nitrosospira multiformis (strain ATCC 25196 / NCIMB 11849 / C 71).